Consider the following 195-residue polypeptide: Pyruvoyl-dependent arginine decarboxylase AaxB (195 aa).

Position 53 is a pyruvic acid (Ser) (Ser-53).

This sequence belongs to the pyruvoyl-dependent arginine decarboxylase family. In terms of assembly, trimer of an alpha-beta dimer. Pyruvate serves as cofactor.

It localises to the cytoplasm. It carries out the reaction L-arginine + H(+) = agmatine + CO2. In terms of biological role, part of the AaxABC system, catalyzes the decarboxylation of L-arginine. The arginine uptake by the bacterium in the macrophage may be a virulence factor against the host innate immune response. This Chlamydia trachomatis serovar L2 (strain ATCC VR-902B / DSM 19102 / 434/Bu) protein is Pyruvoyl-dependent arginine decarboxylase AaxB (aaxB).